A 110-amino-acid polypeptide reads, in one-letter code: Insulin-1 (110 aa).

The first 24 residues, 1–24, serve as a signal peptide directing secretion; that stretch reads MALWMRFLPLLALLVLWEPKPAQA. Intrachain disulfides connect Cys31/Cys96, Cys43/Cys109, and Cys95/Cys100. The propeptide at 57–87 is c peptide; sequence EVEDPQVPQLELGGGPEAGDLQTLALEVARQ.

It belongs to the insulin family. As to quaternary structure, heterodimer of a B chain and an A chain linked by two disulfide bonds.

It localises to the secreted. Functionally, insulin decreases blood glucose concentration. It increases cell permeability to monosaccharides, amino acids and fatty acids. It accelerates glycolysis, the pentose phosphate cycle, and glycogen synthesis in liver. The protein is Insulin-1 (Ins1) of Rattus norvegicus (Rat).